We begin with the raw amino-acid sequence, 82 residues long: Beta-defensin 119 (82 aa).

The signal sequence occupies residues 1–19; sequence MKFFLFFVILLAMEPVISG. 3 cysteine pairs are disulfide-bonded: C26–C53, C33–C47, and C37–C54.

The protein belongs to the beta-defensin family.

The protein resides in the secreted. Functionally, has antibacterial activity. The polypeptide is Beta-defensin 119 (DEFB119) (Canis lupus familiaris (Dog)).